We begin with the raw amino-acid sequence, 234 residues long: Large ribosomal subunit protein uL1 (234 aa).

It belongs to the universal ribosomal protein uL1 family. In terms of assembly, part of the 50S ribosomal subunit.

Its function is as follows. Binds directly to 23S rRNA. The L1 stalk is quite mobile in the ribosome, and is involved in E site tRNA release. Functionally, protein L1 is also a translational repressor protein, it controls the translation of the L11 operon by binding to its mRNA. In Sulfurovum sp. (strain NBC37-1), this protein is Large ribosomal subunit protein uL1.